The sequence spans 365 residues: MNKIDFRLEKTFGYTTGACAAAGSYSALYFLKNNKKLDFVEILNLKGDSLIIPIKNIEKQGNTAISTVEKFSGEDIDITNGMDIKIKVTLENMDNNCSKSSNVKIIGGTGVGFITKSGLQVKPGKPAINPKPREMIETNLKSLLKDNECVTVKISVPNGDEIAKKTLNPKLGIIGGISILGTTGIVRPMSNDAYKESLAPQIDVALANNFKNLIFVPGNIGTKHAKILLNAEEDQIIEVSNFWDHMLDKAKEKGVKDITVFGHAGKIVKLAGGIFDTHSRVADARNEILCAYTSLATQDVKILQKILQSNTTEDIVEILIEKGILTEVFEKVSKRVVERLSLRWEGINFSCIIIDMEGNILGKYV.

The protein belongs to the CbiD family.

The catalysed reaction is Co-precorrin-5B + S-adenosyl-L-methionine = Co-precorrin-6A + S-adenosyl-L-homocysteine. It functions in the pathway cofactor biosynthesis; adenosylcobalamin biosynthesis; cob(II)yrinate a,c-diamide from sirohydrochlorin (anaerobic route): step 6/10. In terms of biological role, catalyzes the methylation of C-1 in cobalt-precorrin-5B to form cobalt-precorrin-6A. The sequence is that of Cobalt-precorrin-5B C(1)-methyltransferase from Methanococcus maripaludis (strain C5 / ATCC BAA-1333).